The chain runs to 300 residues: ATP-dependent (S)-NAD(P)H-hydrate dehydratase (300 aa).

Residues 7-289 (IEARLKSIIP…ESIPSVFDQV (283 aa)) form the YjeF C-terminal domain. (6S)-NADPHX-binding positions include glycine 107 and 160–166 (NVMEYRR). ATP-binding positions include 194-198 (KGQVD) and 213-222 (GSPRRCGGQG). Aspartate 223 serves as a coordination point for (6S)-NADPHX.

It belongs to the NnrD/CARKD family. Requires Mg(2+) as cofactor.

The enzyme catalyses (6S)-NADHX + ATP = ADP + phosphate + NADH + H(+). It catalyses the reaction (6S)-NADPHX + ATP = ADP + phosphate + NADPH + H(+). Its function is as follows. Catalyzes the dehydration of the S-form of NAD(P)HX at the expense of ATP, which is converted to ADP. Together with NAD(P)HX epimerase, which catalyzes the epimerization of the S- and R-forms, the enzyme allows the repair of both epimers of NAD(P)HX, a damaged form of NAD(P)H that is a result of enzymatic or heat-dependent hydration. This Entamoeba histolytica (strain ATCC 30459 / HM-1:IMSS / ABRM) protein is ATP-dependent (S)-NAD(P)H-hydrate dehydratase.